Reading from the N-terminus, the 297-residue chain is Acetylglutamate kinase (297 aa).

Residues 70–71, R92, and N194 each bind substrate; that span reads GG.

The protein belongs to the acetylglutamate kinase family. ArgB subfamily.

It localises to the cytoplasm. The catalysed reaction is N-acetyl-L-glutamate + ATP = N-acetyl-L-glutamyl 5-phosphate + ADP. Its pathway is amino-acid biosynthesis; L-arginine biosynthesis; N(2)-acetyl-L-ornithine from L-glutamate: step 2/4. Catalyzes the ATP-dependent phosphorylation of N-acetyl-L-glutamate. The chain is Acetylglutamate kinase from Herminiimonas arsenicoxydans.